Reading from the N-terminus, the 1269-residue chain is DNA-directed RNA polymerase subunit beta (1269 aa).

The protein belongs to the RNA polymerase beta chain family. As to quaternary structure, the RNAP catalytic core consists of 2 alpha, 1 beta, 1 beta' and 1 omega subunit. When a sigma factor is associated with the core the holoenzyme is formed, which can initiate transcription.

The enzyme catalyses RNA(n) + a ribonucleoside 5'-triphosphate = RNA(n+1) + diphosphate. Its function is as follows. DNA-dependent RNA polymerase catalyzes the transcription of DNA into RNA using the four ribonucleoside triphosphates as substrates. The sequence is that of DNA-directed RNA polymerase subunit beta from Porphyromonas gingivalis (strain ATCC BAA-308 / W83).